A 1051-amino-acid chain; its full sequence is Probable valine--tRNA ligase, mitochondrial (1051 aa).

Residues 1–20 (MNKLLFLSKKSSTSNLYRFY) constitute a mitochondrion transit peptide. Positions 71–81 (PNVTGSLHIGH) match the 'HIGH' region motif. The 'KMSKS' region motif lies at 606 to 610 (KMSKS). Lys-609 is an ATP binding site. A coiled-coil region spans residues 972-1019 (KELQISIEFDKEINNQLNQKLINPNQSNDKKILKLENFIKQLQDEIDN).

Belongs to the class-I aminoacyl-tRNA synthetase family.

The protein localises to the mitochondrion. The catalysed reaction is tRNA(Val) + L-valine + ATP = L-valyl-tRNA(Val) + AMP + diphosphate. This Dictyostelium discoideum (Social amoeba) protein is Probable valine--tRNA ligase, mitochondrial (valS2).